The primary structure comprises 346 residues: Inositol 2-dehydrogenase/D-chiro-inositol 3-dehydrogenase (346 aa).

Over residues G322–K331 the composition is skewed to basic and acidic residues. Residues G322–V346 form a disordered region.

Belongs to the Gfo/Idh/MocA family. In terms of assembly, homotetramer.

It carries out the reaction myo-inositol + NAD(+) = scyllo-inosose + NADH + H(+). The catalysed reaction is 1D-chiro-inositol + NAD(+) = scyllo-inosine + NADH + H(+). Its pathway is polyol metabolism; myo-inositol degradation into acetyl-CoA; acetyl-CoA from myo-inositol: step 1/7. Its function is as follows. Involved in the oxidation of myo-inositol (MI) and D-chiro-inositol (DCI) to 2-keto-myo-inositol (2KMI or 2-inosose) and 1-keto-D-chiro-inositol (1KDCI), respectively. This chain is Inositol 2-dehydrogenase/D-chiro-inositol 3-dehydrogenase, found in Shouchella clausii (strain KSM-K16) (Alkalihalobacillus clausii).